We begin with the raw amino-acid sequence, 205 residues long: Ribonuclease HII (205 aa).

One can recognise an RNase H type-2 domain in the interval 14-201 (EIIAGVDEAG…KGNINHSAIL (188 aa)). D20, E21, and D111 together coordinate a divalent metal cation.

The protein belongs to the RNase HII family. Mn(2+) serves as cofactor. Mg(2+) is required as a cofactor.

It localises to the cytoplasm. It carries out the reaction Endonucleolytic cleavage to 5'-phosphomonoester.. In terms of biological role, endonuclease that specifically degrades the RNA of RNA-DNA hybrids. This chain is Ribonuclease HII, found in Orientia tsutsugamushi (strain Ikeda) (Rickettsia tsutsugamushi).